The sequence spans 246 residues: 1-(5-phosphoribosyl)-5-[(5-phosphoribosylamino)methylideneamino] imidazole-4-carboxamide isomerase (246 aa).

The Proton acceptor role is filled by D7. The active-site Proton donor is D130.

This sequence belongs to the HisA/HisF family.

The protein resides in the cytoplasm. The catalysed reaction is 1-(5-phospho-beta-D-ribosyl)-5-[(5-phospho-beta-D-ribosylamino)methylideneamino]imidazole-4-carboxamide = 5-[(5-phospho-1-deoxy-D-ribulos-1-ylimino)methylamino]-1-(5-phospho-beta-D-ribosyl)imidazole-4-carboxamide. It participates in amino-acid biosynthesis; L-histidine biosynthesis; L-histidine from 5-phospho-alpha-D-ribose 1-diphosphate: step 4/9. The polypeptide is 1-(5-phosphoribosyl)-5-[(5-phosphoribosylamino)methylideneamino] imidazole-4-carboxamide isomerase (Sodalis glossinidius (strain morsitans)).